Here is a 157-residue protein sequence, read N- to C-terminus: Peptide methionine sulfoxide reductase MsrA (157 aa).

C13 is a catalytic residue.

Belongs to the MsrA Met sulfoxide reductase family.

The enzyme catalyses L-methionyl-[protein] + [thioredoxin]-disulfide + H2O = L-methionyl-(S)-S-oxide-[protein] + [thioredoxin]-dithiol. The catalysed reaction is [thioredoxin]-disulfide + L-methionine + H2O = L-methionine (S)-S-oxide + [thioredoxin]-dithiol. Its function is as follows. Has an important function as a repair enzyme for proteins that have been inactivated by oxidation. Catalyzes the reversible oxidation-reduction of methionine sulfoxide in proteins to methionine. This is Peptide methionine sulfoxide reductase MsrA from Methanococcus maripaludis (strain C6 / ATCC BAA-1332).